Here is a 135-residue protein sequence, read N- to C-terminus: Ribosome-binding factor A (135 aa).

Belongs to the RbfA family. As to quaternary structure, monomer. Binds 30S ribosomal subunits, but not 50S ribosomal subunits or 70S ribosomes.

The protein resides in the cytoplasm. Its function is as follows. One of several proteins that assist in the late maturation steps of the functional core of the 30S ribosomal subunit. Associates with free 30S ribosomal subunits (but not with 30S subunits that are part of 70S ribosomes or polysomes). Required for efficient processing of 16S rRNA. May interact with the 5'-terminal helix region of 16S rRNA. The protein is Ribosome-binding factor A of Hahella chejuensis (strain KCTC 2396).